Reading from the N-terminus, the 347-residue chain is NADH-ubiquinone oxidoreductase chain 2 (347 aa).

Transmembrane regions (helical) follow at residues 1 to 21 (MNPL…TIVM), 25 to 45 (HWLV…PVLM), 59 to 79 (YFLT…INLI), 96 to 116 (IIMT…FWVP), 122 to 142 (IQLS…ISIL), 150 to 170 (NLNL…WGGL), 201 to 221 (ALLN…VFML), 242 to 262 (TALL…GFLP), 274 to 294 (NSVI…YFYM), and 326 to 346 (LSPL…LTLL).

It belongs to the complex I subunit 2 family. In terms of assembly, core subunit of respiratory chain NADH dehydrogenase (Complex I) which is composed of 45 different subunits. Interacts with TMEM242.

Its subcellular location is the mitochondrion inner membrane. The catalysed reaction is a ubiquinone + NADH + 5 H(+)(in) = a ubiquinol + NAD(+) + 4 H(+)(out). In terms of biological role, core subunit of the mitochondrial membrane respiratory chain NADH dehydrogenase (Complex I) which catalyzes electron transfer from NADH through the respiratory chain, using ubiquinone as an electron acceptor. Essential for the catalytic activity and assembly of complex I. The sequence is that of NADH-ubiquinone oxidoreductase chain 2 from Eidolon helvum (Straw-colored fruit bat).